The following is an 88-amino-acid chain: Phosphocarrier protein HPr (88 aa).

Residues 1-88 enclose the HPr domain; sequence MVVKTVRVLN…RLFQNKFEEE (88 aa). His15 acts as the Pros-phosphohistidine intermediate in catalysis. The residue at position 46 (Ser46) is a Phosphoserine; by HPrK/P.

This sequence belongs to the HPr family.

Its subcellular location is the cytoplasm. Phosphorylation on Ser-46 inhibits the phosphoryl transfer from enzyme I to HPr. Its function is as follows. General (non sugar-specific) component of the phosphoenolpyruvate-dependent sugar phosphotransferase system (sugar PTS). This major carbohydrate active-transport system catalyzes the phosphorylation of incoming sugar substrates concomitantly with their translocation across the cell membrane. The phosphoryl group from phosphoenolpyruvate (PEP) is transferred to the phosphoryl carrier protein HPr by enzyme I. Phospho-HPr then transfers it to the PTS EIIA domain. The chain is Phosphocarrier protein HPr (ptsH) from Treponema pallidum (strain Nichols).